Reading from the N-terminus, the 310-residue chain is MEFFYEEQVACIEDDKISNSHTKETGSTENTENNELQSRDDKTNEAFQKLEEEVNKRYEKTTSAFKKLVIEKDDGIEINLPISNETTETAQKYLKKLDENIHSVESLAQSYWSKMKTKNFWSGFSSFDNAAENDSNDKDENSKENEIAVGGNRTEAELRTLSKDKSVYLDNKMDLQLDPFDVDEKTEEICSILQGDKDISKLMNDIVPHKISYKDFWHIYFLQRNKILDKESKRKEILSKKEKETEEKEVEWDDEEEEEDDDKVEAVADNKSKGETKVAVSQEGLKDVSDHVGLANKDESKDDDDDDDWE.

Basic and acidic residues-rich tracts occupy residues 15–26 and 135–146; these read DKISNSHTKETG and SNDKDENSKENE. Disordered stretches follow at residues 15–45 and 131–151; these read DKIS…KTNE and AEND…AVGG. The 53-residue stretch at 176–228 folds into the BSD domain; sequence QLDPFDVDEKTEEICSILQGDKDISKLMNDIVPHKISYKDFWHIYFLQRNKIL. The tract at residues 240–310 is disordered; that stretch reads KKEKETEEKE…KDDDDDDDWE (71 aa). A compositionally biased stretch (acidic residues) spans 247-263; that stretch reads EKEVEWDDEEEEEDDDK. 2 stretches are compositionally biased toward basic and acidic residues: residues 264 to 276 and 284 to 300; these read VEAV…KGET and GLKD…KDES. Residues 301–310 are compositionally biased toward acidic residues; that stretch reads KDDDDDDDWE.

Functionally, acts in ubiquitin metabolism and is necessary for the control of single-copy DNA replication. The polypeptide is Protein DOS2 (DOS2) (Saccharomyces cerevisiae (strain ATCC 204508 / S288c) (Baker's yeast)).